Here is a 172-residue protein sequence, read N- to C-terminus: Adenine phosphoribosyltransferase (172 aa).

Belongs to the purine/pyrimidine phosphoribosyltransferase family. Homodimer.

Its subcellular location is the cytoplasm. The catalysed reaction is AMP + diphosphate = 5-phospho-alpha-D-ribose 1-diphosphate + adenine. It participates in purine metabolism; AMP biosynthesis via salvage pathway; AMP from adenine: step 1/1. Functionally, catalyzes a salvage reaction resulting in the formation of AMP, that is energically less costly than de novo synthesis. The polypeptide is Adenine phosphoribosyltransferase (Streptococcus agalactiae serotype Ia (strain ATCC 27591 / A909 / CDC SS700)).